The following is a 520-amino-acid chain: Cytochrome P450 monooxygenase 176 (520 aa).

N-linked (GlcNAc...) asparagine glycosylation is present at N6. Residues 10-27 (LLVVAGALFLTFLTTRFI) traverse the membrane as a helical segment. N-linked (GlcNAc...) asparagine glycosylation is found at N141 and N270. C445 serves as a coordination point for heme. N-linked (GlcNAc...) asparagine glycosylation occurs at N517.

The protein belongs to the cytochrome P450 family. It depends on heme as a cofactor.

The protein localises to the membrane. It functions in the pathway secondary metabolite biosynthesis. Functionally, cytochrome P450 monooxygenase that is able to use delta(6)-protoilludene as a substrate to produce delta(6)-protoilludene-5-ol and an unidentified hydroxyprotoilludene. Is also able to use phenanthrene as a substrate for oxidation. The protein is Cytochrome P450 monooxygenase 176 of Postia placenta (strain ATCC 44394 / Madison 698-R) (Brown rot fungus).